The primary structure comprises 141 residues: ATP synthase epsilon chain (141 aa).

It belongs to the ATPase epsilon chain family. F-type ATPases have 2 components, CF(1) - the catalytic core - and CF(0) - the membrane proton channel. CF(1) has five subunits: alpha(3), beta(3), gamma(1), delta(1), epsilon(1). CF(0) has three main subunits: a, b and c.

The protein localises to the cell inner membrane. Its function is as follows. Produces ATP from ADP in the presence of a proton gradient across the membrane. This Pseudomonas syringae pv. syringae (strain B728a) protein is ATP synthase epsilon chain.